We begin with the raw amino-acid sequence, 122 residues long: Large ribosomal subunit protein uL14 (122 aa).

This sequence belongs to the universal ribosomal protein uL14 family. As to quaternary structure, part of the 50S ribosomal subunit. Forms a cluster with proteins L3 and L19. In the 70S ribosome, L14 and L19 interact and together make contacts with the 16S rRNA in bridges B5 and B8.

Its function is as follows. Binds to 23S rRNA. Forms part of two intersubunit bridges in the 70S ribosome. In Hahella chejuensis (strain KCTC 2396), this protein is Large ribosomal subunit protein uL14.